The chain runs to 467 residues: ATP synthase subunit beta (467 aa).

156 to 163 (GGAGVGKT) contributes to the ATP binding site.

It belongs to the ATPase alpha/beta chains family. F-type ATPases have 2 components, CF(1) - the catalytic core - and CF(0) - the membrane proton channel. CF(1) has five subunits: alpha(3), beta(3), gamma(1), delta(1), epsilon(1). CF(0) has three main subunits: a(1), b(2) and c(9-12). The alpha and beta chains form an alternating ring which encloses part of the gamma chain. CF(1) is attached to CF(0) by a central stalk formed by the gamma and epsilon chains, while a peripheral stalk is formed by the delta and b chains.

It is found in the cell inner membrane. It carries out the reaction ATP + H2O + 4 H(+)(in) = ADP + phosphate + 5 H(+)(out). Functionally, produces ATP from ADP in the presence of a proton gradient across the membrane. The catalytic sites are hosted primarily by the beta subunits. The chain is ATP synthase subunit beta from Cupriavidus metallidurans (strain ATCC 43123 / DSM 2839 / NBRC 102507 / CH34) (Ralstonia metallidurans).